An 809-amino-acid polypeptide reads, in one-letter code: Lon protease (809 aa).

Residues 42 to 242 (LVIYPLGGRP…KVLTLLKKEL (201 aa)) form the Lon N-terminal domain. 395–402 (GPPGVGKT) provides a ligand contact to ATP. Residues 629 to 809 (LTGVGIVTGL…YAEVAKLVFG (181 aa)) enclose the Lon proteolytic domain. Residues serine 716 and lysine 759 contribute to the active site.

The protein belongs to the peptidase S16 family. As to quaternary structure, homohexamer. Organized in a ring with a central cavity.

It is found in the cytoplasm. The catalysed reaction is Hydrolysis of proteins in presence of ATP.. ATP-dependent serine protease that mediates the selective degradation of mutant and abnormal proteins as well as certain short-lived regulatory proteins. Required for cellular homeostasis and for survival from DNA damage and developmental changes induced by stress. Degrades polypeptides processively to yield small peptide fragments that are 5 to 10 amino acids long. Binds to DNA in a double-stranded, site-specific manner. The sequence is that of Lon protease from Magnetococcus marinus (strain ATCC BAA-1437 / JCM 17883 / MC-1).